The primary structure comprises 478 residues: Aspartyl/glutamyl-tRNA(Asn/Gln) amidotransferase subunit B (478 aa).

The protein belongs to the GatB/GatE family. GatB subfamily. Heterotrimer of A, B and C subunits.

It carries out the reaction L-glutamyl-tRNA(Gln) + L-glutamine + ATP + H2O = L-glutaminyl-tRNA(Gln) + L-glutamate + ADP + phosphate + H(+). The enzyme catalyses L-aspartyl-tRNA(Asn) + L-glutamine + ATP + H2O = L-asparaginyl-tRNA(Asn) + L-glutamate + ADP + phosphate + 2 H(+). Functionally, allows the formation of correctly charged Asn-tRNA(Asn) or Gln-tRNA(Gln) through the transamidation of misacylated Asp-tRNA(Asn) or Glu-tRNA(Gln) in organisms which lack either or both of asparaginyl-tRNA or glutaminyl-tRNA synthetases. The reaction takes place in the presence of glutamine and ATP through an activated phospho-Asp-tRNA(Asn) or phospho-Glu-tRNA(Gln). This is Aspartyl/glutamyl-tRNA(Asn/Gln) amidotransferase subunit B from Brevibacillus brevis (strain 47 / JCM 6285 / NBRC 100599).